The primary structure comprises 230 residues: Sugar fermentation stimulation protein homolog (230 aa).

The protein belongs to the SfsA family.

In Pyrococcus furiosus (strain ATCC 43587 / DSM 3638 / JCM 8422 / Vc1), this protein is Sugar fermentation stimulation protein homolog.